Reading from the N-terminus, the 767-residue chain is Photosystem I P700 chlorophyll a apoprotein A1 (767 aa).

Residues 1–22 (MTISPPESGEKDKKILESPVKA) form a disordered region. A compositionally biased stretch (basic and acidic residues) spans 8-22 (SGEKDKKILESPVKA). Transmembrane regions (helical) follow at residues 76–99 (IFSAHFGHLAVIFIWMSAAFFHGA), 162–185 (LMALAIGAVVMAALMLHAGIFHYH), 201–225 (LNHHIAGLVGLGSLAWAGHCIHIGA), 309–327 (VSHHHLAFGVIAIIGGHMY), 368–391 (RHAQLSVNLAMLGSLSILISHHMY), 407–433 (LGLFTHHMWIGGLFIVGAGAHAGIAMV), 455–477 (ALISHLNWVCMWLGFHSFGLYIH), and 558–576 (LMIHHIHAFQIHVTVLILL). The [4Fe-4S] cluster site is built by cysteine 600 and cysteine 609. 2 helical membrane-spanning segments follow: residues 616-637 (HVFLGLFWMYNCLSIVIFHFSW) and 681-703 (ISMYGLMFLGAHFIWAFSLMFLF). Divinylchlorophyll a' is bound at residue histidine 692. Positions 700 and 708 each coordinate divinyl chlorophyll a. Residue tryptophan 709 coordinates phylloquinone. A helical transmembrane segment spans residues 741–761 (AVGVTHFLVGGIATTWAFFHA).

This sequence belongs to the PsaA/PsaB family. As to quaternary structure, the PsaA/B heterodimer binds the P700 divinyl chlorophyll special pair and subsequent electron acceptors. PSI consists of a core antenna complex that captures photons, and an electron transfer chain that converts photonic excitation into a charge separation. The cyanobacterial PSI reaction center is composed of one copy each of PsaA,B,C,D,E,F,I,J,K,L,M and X, and forms trimeric complexes. PSI electron transfer chain: 5 divinyl chlorophyll a, 1 divinyl chlorophyll a', 2 phylloquinones and 3 4Fe-4S clusters. PSI core antenna: 90 divinyl chlorophyll a, 22 carotenoids, 3 phospholipids and 1 galactolipid. P700 is a divinyl chlorophyll a/divinyl chlorophyll a' dimer, A0 is one or more divinyl chlorophyll a, A1 is one or both phylloquinones and FX is a shared 4Fe-4S iron-sulfur center. serves as cofactor.

It localises to the cellular thylakoid membrane. The enzyme catalyses reduced [plastocyanin] + hnu + oxidized [2Fe-2S]-[ferredoxin] = oxidized [plastocyanin] + reduced [2Fe-2S]-[ferredoxin]. PsaA and PsaB bind P700, the primary electron donor of photosystem I (PSI), as well as the electron acceptors A0, A1 and FX. PSI is a plastocyanin/cytochrome c6-ferredoxin oxidoreductase, converting photonic excitation into a charge separation, which transfers an electron from the donor P700 chlorophyll pair to the spectroscopically characterized acceptors A0, A1, FX, FA and FB in turn. Oxidized P700 is reduced on the lumenal side of the thylakoid membrane by plastocyanin or cytochrome c6. This is Photosystem I P700 chlorophyll a apoprotein A1 from Prochlorococcus marinus subsp. pastoris (strain CCMP1986 / NIES-2087 / MED4).